Here is a 254-residue protein sequence, read N- to C-terminus: Glucosamine-6-phosphate deaminase (254 aa).

Aspartate 65 functions as the Proton acceptor; for enolization step in the catalytic mechanism. The For ring-opening step role is filled by asparagine 134. Catalysis depends on histidine 136, which acts as the Proton acceptor; for ring-opening step. The active-site For ring-opening step is the glutamate 141.

This sequence belongs to the glucosamine/galactosamine-6-phosphate isomerase family. NagB subfamily.

It carries out the reaction alpha-D-glucosamine 6-phosphate + H2O = beta-D-fructose 6-phosphate + NH4(+). It functions in the pathway amino-sugar metabolism; N-acetylneuraminate degradation; D-fructose 6-phosphate from N-acetylneuraminate: step 5/5. Functionally, catalyzes the reversible isomerization-deamination of glucosamine 6-phosphate (GlcN6P) to form fructose 6-phosphate (Fru6P) and ammonium ion. This Corynebacterium aurimucosum (strain ATCC 700975 / DSM 44827 / CIP 107346 / CN-1) (Corynebacterium nigricans) protein is Glucosamine-6-phosphate deaminase.